Consider the following 84-residue polypeptide: MATMENKVICALVLVSMLALGTLAEAQTETCTVAPRERQNCGFPGVTPSQCANKGCCFDDTVRGVPWCFYPNTIDVPPEEECEF.

A signal peptide spans 1-24 (MATMENKVICALVLVSMLALGTLA). One can recognise a P-type domain in the interval 29 to 72 (ETCTVAPRERQNCGFPGVTPSQCANKGCCFDDTVRGVPWCFYPN). 3 disulfide bridges follow: Cys31-Cys57, Cys41-Cys56, and Cys51-Cys68.

As to quaternary structure, heterodimer with GKN2; disulfide linked. In terms of tissue distribution, found in stomach, with highest levels in the upper gastric mucosal cells (at protein level). Detected in goblet cells of the small and large intestine and rectum, small submucosal glands in the esophagus, mucous acini of the sublingual gland, submucosal glands of the trachea, and epithelial cells lining the exocrine pancreatic ducts but not in the remainder of the pancreas (at protein level). Scattered expression is detected in the epithelial cells of the gallbladder and submucosal glands of the vagina, and weak expression is observed in the bronchial goblet cells of the pseudostratified epithelia in the respiratory system (at protein level). Detected in urine (at protein level). Strongly expressed in breast cancer but at low levels in normal mammary tissue. It is regulated by estrogen in MCF-7 cells. Strong expression found in normal gastric mucosa and in the regenerative tissues surrounding ulcerous lesions of gastrointestinal tract, but lower expression found in gastric cancer (at protein level).

It localises to the secreted. In terms of biological role, stabilizer of the mucous gel overlying the gastrointestinal mucosa that provides a physical barrier against various noxious agents. May inhibit the growth of calcium oxalate crystals in urine. The chain is Trefoil factor 1 (TFF1) from Homo sapiens (Human).